The chain runs to 37 residues: Large ribosomal subunit protein bL36B (37 aa).

Belongs to the bacterial ribosomal protein bL36 family.

The sequence is that of Large ribosomal subunit protein bL36B from Kineococcus radiotolerans (strain ATCC BAA-149 / DSM 14245 / SRS30216).